Here is a 625-residue protein sequence, read N- to C-terminus: Chaperone protein HtpG (625 aa).

The interval 1-337 (MSTNQETRGF…TNDLPLNVSR (337 aa)) is a; substrate-binding. Positions 338–554 (EILQENKITA…NDEMTTQMAK (217 aa)) are b. The c stretch occupies residues 555–625 (LFAAMGQKAP…FIKRMNKLLG (71 aa)).

It belongs to the heat shock protein 90 family. Homodimer.

It localises to the cytoplasm. Molecular chaperone. Has ATPase activity. This Actinobacillus pleuropneumoniae serotype 3 (strain JL03) protein is Chaperone protein HtpG.